The sequence spans 343 residues: Galactoside alpha-(1,2)-fucosyltransferase 2 (343 aa).

The Cytoplasmic segment spans residues 1–14; sequence MLVVQMPFSFPMAH. Residues 15-28 form a helical; Signal-anchor for type II membrane protein membrane-spanning segment; sequence FILFVFTVSTIFHV. Topologically, residues 29–343 are lumenal; sequence QQRLAKIQAM…AADLSPLLKH (315 aa). Residues asparagine 188, asparagine 282, and asparagine 308 are each glycosylated (N-linked (GlcNAc...) asparagine).

Belongs to the glycosyltransferase 11 family.

Its subcellular location is the golgi apparatus. It localises to the golgi stack membrane. The enzyme catalyses a beta-D-galactosyl-(1-&gt;3)-N-acetyl-beta-D-glucosaminyl derivative + GDP-beta-L-fucose = an alpha-L-Fuc-(1-&gt;2)-beta-D-Gal-(1-&gt;3)-beta-D-GlcNAc derivative + GDP + H(+). It catalyses the reaction a beta-D-galactosyl-(1-&gt;4)-N-acetyl-beta-D-glucosaminyl derivative + GDP-beta-L-fucose = an alpha-L-Fuc-(1-&gt;2)-beta-D-Gal-(1-&gt;4)-beta-D-GlcNAc derivative + GDP + H(+). The catalysed reaction is a neolactoside nLc4Cer + GDP-beta-L-fucose = a neolactoside IV(2)-alpha-Fuc-nLc4Cer + GDP + H(+). It carries out the reaction a neolactoside nLc4Cer(d18:1(4E)) + GDP-beta-L-fucose = a neolactoside IV(2)-alpha-Fuc-nLc4Cer(d18:1(4E)) + GDP + H(+). The enzyme catalyses a ganglioside GM1 + GDP-beta-L-fucose = a ganglioside Fuc-GM1 + GDP + H(+). It catalyses the reaction a ganglioside GA1 + GDP-beta-L-fucose = a ganglioside Fuc-GA1 + GDP + H(+). The catalysed reaction is Lc4Cer + GDP-beta-L-fucose = alpha-L-fucosyl-(1-&gt;2)-beta-D-galactosyl-(1-&gt;3)-N-acetyl-beta-D-glucosaminyl-(1-&gt;3)-beta-D-galactosyl-(1-&gt;4)-beta-D-glucosyl-(1&lt;-&gt;1')-ceramide + GDP + H(+). It carries out the reaction a beta-D-Gal-(1-&gt;3)-beta-D-GlcNAc-(1-&gt;3)-beta-D-Gal-(1-&gt;4)-beta-D-Glc-(1&lt;-&gt;1')-Cer(d18:1(4E)) + GDP-beta-L-fucose = alpha-L-fucosyl-(1-&gt;2)- beta-D-galactosyl-(1-&gt;3)-N-acetyl-beta-D-glucosaminyl-(1-&gt;3)-beta-D-galactosyl-(1-&gt;4)-beta-D-glucosyl-(1&lt;-&gt;1')-N-acylsphing-4-enine + GDP + H(+). The enzyme catalyses a ganglioside GD1b + GDP-beta-L-fucose = a ganglioside Fuc-GD1b + GDP + H(+). It catalyses the reaction a ganglioside GM1 (d18:1(4E)) + GDP-beta-L-fucose = a ganglioside Fuc-GM1 (d18:1(4E)) + GDP + H(+). The catalysed reaction is a globoside GalGb4Cer (d18:1(4E)) + GDP-beta-L-fucose = a globoside Globo-H (d18:1(4E)) + GDP + H(+). It carries out the reaction a lactoside III(4)-a-Fuc-Lc4Cer + GDP-beta-L-fucose = a lactoside IV(2),III(4)-a-[Fuc]2-Lc4Cer + GDP + H(+). The enzyme catalyses beta-D-galactosyl-(1-&gt;3)-N-acetyl-D-galactosamine + GDP-beta-L-fucose = alpha-L-fucosyl-(1-&gt;2)-beta-D-galactosyl-(1-&gt;3)-N-acetyl-D-galactosamine + GDP + H(+). It participates in protein modification; protein glycosylation. Functionally, catalyzes the transfer of L-fucose, from a guanosine diphosphate-beta-L-fucose, to the terminal galactose on both O- and N-linked glycans chains of cell surface glycoproteins and glycolipids and the resulting epitope regulates several processes such as cell-cell interaction including host-microbe interaction, cell surface expression and cell proliferation. Preferentially fucosylates gangliosides GA1 and GM1 in the antrum, cecum and colon and in the female reproductive organs. Fucosylated host glycoproteins or glycolipids mediate interaction with intestinal microbiota influencing its composition. Creates a soluble precursor oligosaccharide FuC-alpha ((1,2)Galbeta-) called the H antigen which is an essential substrate for the final step in the soluble ABO blood group antigen synthesis pathway. The polypeptide is Galactoside alpha-(1,2)-fucosyltransferase 2 (Hylobates lar (Lar gibbon)).